The chain runs to 242 residues: Cytochrome c oxidase subunit 2 (242 aa).

Residues D7 to I33 lie on the Mitochondrial intermembrane side of the membrane. A helical membrane pass occupies residues V34 to N55. At F56–E73 the chain is on the mitochondrial matrix side. The chain crosses the membrane as a helical span at residues I74–C98. Residues D99 to Q242 are Mitochondrial intermembrane-facing. 6 residues coordinate Cu cation: H177, C212, E214, C216, H220, and M223. E214 serves as a coordination point for Mg(2+).

Belongs to the cytochrome c oxidase subunit 2 family. Component of the cytochrome c oxidase (complex IV, CIV), a multisubunit enzyme composed of a catalytic core of 3 subunits and several supernumerary subunits. The complex exists as a monomer or a dimer and forms supercomplexes (SCs) in the inner mitochondrial membrane with ubiquinol-cytochrome c oxidoreductase (cytochrome b-c1 complex, complex III, CIII). The cofactor is Cu cation. In terms of processing, the signal sequence of COX2 is processed by IMP1.

The protein localises to the mitochondrion inner membrane. The catalysed reaction is 4 Fe(II)-[cytochrome c] + O2 + 8 H(+)(in) = 4 Fe(III)-[cytochrome c] + 2 H2O + 4 H(+)(out). Component of the cytochrome c oxidase, the last enzyme in the mitochondrial electron transport chain which drives oxidative phosphorylation. The respiratory chain contains 3 multisubunit complexes succinate dehydrogenase (complex II, CII), ubiquinol-cytochrome c oxidoreductase (cytochrome b-c1 complex, complex III, CIII) and cytochrome c oxidase (complex IV, CIV), that cooperate to transfer electrons derived from NADH and succinate to molecular oxygen, creating an electrochemical gradient over the inner membrane that drives transmembrane transport and the ATP synthase. Cytochrome c oxidase is the component of the respiratory chain that catalyzes the reduction of oxygen to water. Electrons originating from reduced cytochrome c in the intermembrane space (IMS) are transferred via the dinuclear copper A center (CU(A)) of subunit 2 and heme A of subunit 1 to the active site in subunit 1, a binuclear center (BNC) formed by heme A3 and copper B (CU(B)). The BNC reduces molecular oxygen to 2 water molecules using 4 electrons from cytochrome c in the IMS and 4 protons from the mitochondrial matrix. The chain is Cytochrome c oxidase subunit 2 (COX2) from Yarrowia lipolytica (strain CLIB 122 / E 150) (Yeast).